Here is a 227-residue protein sequence, read N- to C-terminus: MMVAHTAQQLDLREKLLTNGVHSLSDIELLAVFISSGNNKKSCLQLAYELTKHLGNLRNILNADLQSFKSIHGLGEVRYAQLQAAKEICHRSDFIDLQKEIRLSNTQQTYAFLKKRLRDYKNETFAALFLDNQHRIIAYEELFSGTINTATVYPRPIVERVLQLNAAALILAHNHPSGLSDASQQDLAITERIRDALDLVDARLLDHIVIGDNEVYSIFAENKWACN.

The 124-residue stretch at 102-225 (RLSNTQQTYA…YSIFAENKWA (124 aa)) folds into the MPN domain. 3 residues coordinate Zn(2+): His-173, His-175, and Asp-186. A JAMM motif motif is present at residues 173–186 (HNHPSGLSDASQQD).

It belongs to the UPF0758 family.

The sequence is that of UPF0758 protein lpl2409 from Legionella pneumophila (strain Lens).